A 765-amino-acid polypeptide reads, in one-letter code: Kinesin-like protein KIN-14S (765 aa).

The 325-residue stretch at 132 to 456 (NIRVFCRCRP…LNFASRVRGI (325 aa)) folds into the Kinesin motor domain. Position 215-222 (215-222 (GQTGTGKT)) interacts with ATP. A coiled-coil region spans residues 469 to 534 (ELLKSKQMAE…ERKTRIKQES (66 aa)). 2 disordered regions span residues 581–613 (MPQQ…SSMD) and 654–678 (LRPE…RGDP). A compositionally biased stretch (low complexity) spans 602-611 (NNNSNRRSSS).

This sequence belongs to the TRAFAC class myosin-kinesin ATPase superfamily. Kinesin family. KIN-14 subfamily.

The sequence is that of Kinesin-like protein KIN-14S from Arabidopsis thaliana (Mouse-ear cress).